The primary structure comprises 483 residues: MLTLDTLNVMLAVSEEGMVEEMILALLASPQLVIFFEKFPRLKNAVTADLPRWREALRSRLKDARVPQKLTEEVMCYQQSQLLSTPQFIVQLPQILALLHRLHSPYAAQAKQLVESNSTFTPSLHTLFLQRWRLSLVVQATTLNQQLLEEEREQLLSDVQERMTLSGQLEPTLAENDNAAGRLWDMSAGQLKRGDYQLIVKYGEFLAAQPELKQLAEQLGRSREAKSVPKKDAPMETFRTLVREPATVPEQVDGIQQSDDILRLLPPELATLGITELEYEFYRRLVEKQLLTYRLHGEAWREKVTERPVVHQDVDKQPRGPFIVCVDTSGSMGGFNEQCAKAFCLALMRVALADNRRCFIMLFSTEVVRYELSGPEGIEQAIRFLSQRFRGGTDIASCFRAIIERMQRRKWFDADAVVISDFIAQRLPDDVVSKVGELQRLHQHRFHAVAMSAHGKPGIMRIFDHIWRFDTGMRSRLLRRWRR.

Belongs to the ViaA family. Homodimer. Interacts with RavA.

The protein resides in the cytoplasm. Component of the RavA-ViaA chaperone complex, which may act on the membrane to optimize the function of some of the respiratory chains. ViaA stimulates the ATPase activity of RavA. This Salmonella arizonae (strain ATCC BAA-731 / CDC346-86 / RSK2980) protein is Regulatory protein ViaA.